Consider the following 322-residue polypeptide: MRHAIALTAAAALLPNCAIRPLPEDVTRLNTYAIVTRIRCEARDAVLSELLEYLKNSRSNVSPEIVTQIEEDPNTIANFDRSRLPNATRKKIDLYANAAIVYDFEFDMSQHSRNSLGATLNDTWSSGIFNLGVSGAHERTRRNQRRFRVEDNFYKLFTDPPRCEPYSENGKFKREKNYAYPITGYIGLQEIIDTFWRLNEDHILGSTDSGQPKVNKLADEIQFTTKNSFSATPSAELDPANHLKIVAVDAESSHWRQDIHTVTIGVAVQDEEEEPRDERRPRRRLGKAQSAIKNANDAINELQLRNIQILNRSDLQQLLPNL.

The tract at residues 269 to 289 (QDEEEEPRDERRPRRRLGKAQ) is disordered.

This is an uncharacterized protein from Sinorhizobium fredii (strain NBRC 101917 / NGR234).